A 109-amino-acid chain; its full sequence is MQQFEWVHGAWLALAIILEIAANVLLKFSDGFRRKCYGILSLAAVLAAFSALSQAVKGIDLSVAYALWGGFGIAATLAAGWVLFGQRLNPKGWVGVVLLLVGMIMIKLA.

Helical transmembrane passes span 6–26, 36–56, 64–84, and 88–108; these read WVHGAWLALAIILEIAANVLL, CYGILSLAAVLAAFSALSQAV, AYALWGGFGIAATLAAGWVLF, and LNPKGWVGVVLLLVGMIMIKL.

It belongs to the drug/metabolite transporter (DMT) superfamily. Small multidrug resistance (SMR) (TC 2.A.7.1) family. MdtI subfamily. In terms of assembly, forms a complex with MdtJ.

It localises to the cell inner membrane. In terms of biological role, catalyzes the excretion of spermidine. In Salmonella arizonae (strain ATCC BAA-731 / CDC346-86 / RSK2980), this protein is Spermidine export protein MdtI.